Consider the following 325-residue polypeptide: Tetraacyldisaccharide 4'-kinase (325 aa).

Residue Thr55–Thr62 participates in ATP binding.

This sequence belongs to the LpxK family.

The catalysed reaction is a lipid A disaccharide + ATP = a lipid IVA + ADP + H(+). Its pathway is glycolipid biosynthesis; lipid IV(A) biosynthesis; lipid IV(A) from (3R)-3-hydroxytetradecanoyl-[acyl-carrier-protein] and UDP-N-acetyl-alpha-D-glucosamine: step 6/6. Functionally, transfers the gamma-phosphate of ATP to the 4'-position of a tetraacyldisaccharide 1-phosphate intermediate (termed DS-1-P) to form tetraacyldisaccharide 1,4'-bis-phosphate (lipid IVA). This is Tetraacyldisaccharide 4'-kinase from Salmonella typhi.